Reading from the N-terminus, the 553-residue chain is Interleukin-20 receptor subunit alpha (553 aa).

A signal peptide spans 1–29; sequence MRAPGRPALRPLPLPPLLLLLLAAPWGRA. Residues 30–250 are Extracellular-facing; sequence VPCVSGGLPK…KDQSSEFKAK (221 aa). Fibronectin type-III domains follow at residues 37–135 and 136–242; these read LPKP…FLET and QIGP…TLKD. N-linked (GlcNAc...) asparagine glycans are attached at residues asparagine 42, asparagine 83, asparagine 91, asparagine 182, asparagine 191, and asparagine 200. Residues cysteine 87 and cysteine 95 are joined by a disulfide bond. A disulfide bond links cysteine 215 and cysteine 236. The chain crosses the membrane as a helical span at residues 251 to 271; it reads IIFWYVLPVSITVFLFSVMGY. At 272–553 the chain is on the cytoplasmic side; that stretch reads SIYRYIHVGK…EWGLYVQMEN (282 aa). 2 disordered regions span residues 333 to 353 and 462 to 515; these read SSDV…PPQE and QEHT…LGEE. The span at 334–346 shows a compositional bias: polar residues; that stretch reads SDVSSLNDPQPSG. Residues 499 to 513 show a composition bias toward acidic residues; it reads QDSEGCEPSEGDGLG.

Belongs to the type II cytokine receptor family. Heterodimer with IL20RB and heterodimer with IL10RB. In terms of tissue distribution, widely expressed with highest levels in skin and testis and high levels in brain. Highly expressed in psoriatic skin.

The protein localises to the membrane. Functionally, the IL20RA/IL20RB dimer is a receptor for IL19, IL20 and IL24. The IL20RA/IL10RB dimer is a receptor for IL26. The sequence is that of Interleukin-20 receptor subunit alpha (IL20RA) from Homo sapiens (Human).